The primary structure comprises 477 residues: Pentatricopeptide repeat-containing protein At4g14170 (477 aa).

PPR repeat units follow at residues 65–96 (NVVLSSKLVLAYSKLNHLFPTSLSVFWHMPYR), 97–131 (NIFSWNIIIGEFSRSGFASKSIDLFLRMWRESCVR), 133–167 (DDFTLPLILRACSASREAKSGDLIHVLCLKLGFSS), 168–198 (SLFVSSALVIMYVDMGKLLHARKLFDDMPVR), 199–233 (DSVLYTAMFGGYVQQGEAMLGLAMFREMGYSGFAL), 234–264 (DSVVMVSLLMACGQLGALKHGKSVHGWCIRR), 269–299 (GLNLGNAITDMYVKCSILDYAHTVFVNMSRR), 300–334 (DVISWSSLILGYGLDGDVVMSFKLFDEMLKEGIEP), 335–369 (NAVTFLGVLSACAHGGLVEKSWLYFRLMQEYNIVP), and 370–400 (ELKHYASVADCMSRAGLLEEAEKFLEDMPVK). The interval 405–477 (VMGAVLSGCK…ISKVPGCSSI (73 aa)) is type E motif; degenerate.

This sequence belongs to the PPR family. PCMP-E subfamily.

The sequence is that of Pentatricopeptide repeat-containing protein At4g14170 (PCMP-E17) from Arabidopsis thaliana (Mouse-ear cress).